The chain runs to 260 residues: MRPYLDLLRDILDHGCPKGDRTGTGTLSVFGRMMRFDLSRGLPLVTTKKLHLPSIIHELLWFVSGSTNVRDLQRHGVTIWDEWADDNGELGPVYGRQWRNWNGAIDQLAGLVEQLRRNPGSRRLLVSAWNPSDLDAMALPPCHYAFQCHVADGRLSLMFQMRSADVFLGLPFNIAGYALLTHMLAQQTGYEPGELIWCGGDVHLYLNHLEQARLQLTREPYPPPTLKLARKPGSLFDYRYEDFVVEDYQAHPHIKAAVAV.

Residue R21 coordinates dUMP. Residue H51 coordinates (6R)-5,10-methylene-5,6,7,8-tetrahydrofolate. 122-123 serves as a coordination point for dUMP; it reads RR. The Nucleophile role is filled by C142. Residues 162-165, N173, and 203-205 contribute to the dUMP site; these read RSAD and HLY. Residue D165 coordinates (6R)-5,10-methylene-5,6,7,8-tetrahydrofolate. A259 contacts (6R)-5,10-methylene-5,6,7,8-tetrahydrofolate.

Belongs to the thymidylate synthase family. Bacterial-type ThyA subfamily. In terms of assembly, homodimer.

The protein localises to the cytoplasm. The enzyme catalyses dUMP + (6R)-5,10-methylene-5,6,7,8-tetrahydrofolate = 7,8-dihydrofolate + dTMP. It participates in pyrimidine metabolism; dTTP biosynthesis. Its function is as follows. Catalyzes the reductive methylation of 2'-deoxyuridine-5'-monophosphate (dUMP) to 2'-deoxythymidine-5'-monophosphate (dTMP) while utilizing 5,10-methylenetetrahydrofolate (mTHF) as the methyl donor and reductant in the reaction, yielding dihydrofolate (DHF) as a by-product. This enzymatic reaction provides an intracellular de novo source of dTMP, an essential precursor for DNA biosynthesis. The polypeptide is Thymidylate synthase (Methylococcus capsulatus (strain ATCC 33009 / NCIMB 11132 / Bath)).